The primary structure comprises 363 residues: UDP-N-acetylglucosamine--N-acetylmuramyl-(pentapeptide) pyrophosphoryl-undecaprenol N-acetylglucosamine transferase (363 aa).

Residues 14 to 16 (TGG), Arg171, Ser200, and Gln290 contribute to the UDP-N-acetyl-alpha-D-glucosamine site.

This sequence belongs to the glycosyltransferase 28 family. MurG subfamily.

The protein localises to the cell inner membrane. It catalyses the reaction di-trans,octa-cis-undecaprenyl diphospho-N-acetyl-alpha-D-muramoyl-L-alanyl-D-glutamyl-meso-2,6-diaminopimeloyl-D-alanyl-D-alanine + UDP-N-acetyl-alpha-D-glucosamine = di-trans,octa-cis-undecaprenyl diphospho-[N-acetyl-alpha-D-glucosaminyl-(1-&gt;4)]-N-acetyl-alpha-D-muramoyl-L-alanyl-D-glutamyl-meso-2,6-diaminopimeloyl-D-alanyl-D-alanine + UDP + H(+). The protein operates within cell wall biogenesis; peptidoglycan biosynthesis. In terms of biological role, cell wall formation. Catalyzes the transfer of a GlcNAc subunit on undecaprenyl-pyrophosphoryl-MurNAc-pentapeptide (lipid intermediate I) to form undecaprenyl-pyrophosphoryl-MurNAc-(pentapeptide)GlcNAc (lipid intermediate II). In Borreliella afzelii (strain PKo) (Borrelia afzelii), this protein is UDP-N-acetylglucosamine--N-acetylmuramyl-(pentapeptide) pyrophosphoryl-undecaprenol N-acetylglucosamine transferase.